Consider the following 189-residue polypeptide: Ribosome-recycling factor (189 aa).

It belongs to the RRF family.

It is found in the cytoplasm. In terms of biological role, responsible for the release of ribosomes from messenger RNA at the termination of protein biosynthesis. May increase the efficiency of translation by recycling ribosomes from one round of translation to another. The protein is Ribosome-recycling factor of Salinibacter ruber (strain DSM 13855 / M31).